The sequence spans 1163 residues: Protein phosphatase 1 regulatory subunit 26 (1163 aa).

Positions 65–83 (HERLTQRGQRAERSRDTRL) are enriched in basic and acidic residues. 7 disordered regions span residues 65 to 91 (HERLTQRGQRAERSRDTRLAPKPAVCK), 144 to 253 (RGGA…TSAR), 266 to 393 (RKPP…KKKL), 463 to 496 (APMEGSDRPPSRNPLFCPQPMPPRSEGDSSNIDS), 514 to 653 (VGSP…DEDL), 672 to 929 (RDPR…TATA), and 1073 to 1163 (TQPG…GLKL). 2 stretches are compositionally biased toward polar residues: residues 163–179 (HSSTLPIPCPSQLTPGS) and 189–201 (DQGSTSPASMSSE). The span at 208–236 (IRAEIEQFLNEKRQHENPKCDGFVDKKSD) shows a compositional bias: basic and acidic residues. The span at 273 to 297 (KMSTQQRNFQPKPTTEPETPVSTKL) shows a compositional bias: polar residues. The span at 315-324 (MPARRSKRIR) shows a compositional bias: basic residues. Residues 515–535 (GSPQPAQGPLSSPGPSGQPGI) are compositionally biased toward low complexity. Composition is skewed to basic and acidic residues over residues 566–581 (KIREGRESTQDADHIQ) and 634–645 (ATEKESSEDKSS). Residues 672 to 682 (RDPRASCKKVR) are compositionally biased toward basic residues. The segment covering 766 to 780 (TGASGHPPSASSPTS) has biased composition (low complexity). Acidic residues predominate over residues 783–792 (SAVDSDDSIE). Basic and acidic residues-rich tracts occupy residues 793 to 808 (LEIRRFLAEKAKESIR) and 850 to 859 (EGRRGPERAR). The span at 860-871 (TQATGLLSQSGK) shows a compositional bias: polar residues. Residues 901 to 910 (SSAKASPPSR) are compositionally biased toward low complexity. The segment covering 1105 to 1131 (QQDRRNSASEDKVLDLRYRHRVDREPQ) has biased composition (basic and acidic residues). Residue serine 1111 is modified to Phosphoserine. Polar residues-rich tracts occupy residues 1133-1146 (QETLGSDASEFSDT) and 1154-1163 (ATVSSKGLKL).

Interacts with UTP20 and PPP1CA.

It is found in the nucleus. The protein localises to the nucleolus. In terms of biological role, inhibits phosphatase activity of protein phosphatase 1 (PP1) complexes. May positively regulate cell proliferation. The chain is Protein phosphatase 1 regulatory subunit 26 (Ppp1r26) from Mus musculus (Mouse).